We begin with the raw amino-acid sequence, 374 residues long: Flap endonuclease 1 (374 aa).

An N-domain region spans residues 1-105 (MGVKGLNQLI…GELEKRMIRK (105 aa)). Aspartate 34 contacts Mg(2+). The DNA site is built by arginine 47 and arginine 71. Positions 87, 159, 161, 180, and 182 each coordinate Mg(2+). The I-domain stretch occupies residues 123–254 (EMVRYEKRSV…VTAFKLIKEH (132 aa)). Position 159 (glutamate 159) interacts with DNA. The DNA site is built by glycine 232 and aspartate 234. Aspartate 234 serves as a coordination point for Mg(2+). Residues 341 to 349 (VQGRLDGFF) are interaction with PCNA. The span at 354 to 365 (TEKRKPEQDKKT) shows a compositional bias: basic and acidic residues. Residues 354–374 (TEKRKPEQDKKTKGSKKAKKK) are disordered.

The protein belongs to the XPG/RAD2 endonuclease family. FEN1 subfamily. Interacts with PCNA. Three molecules of FEN1 bind to one PCNA trimer with each molecule binding to one PCNA monomer. PCNA stimulates the nuclease activity without altering cleavage specificity. Requires Mg(2+) as cofactor. Phosphorylated. Phosphorylation upon DNA damage induces relocalization to the nuclear plasma.

It is found in the nucleus. The protein localises to the nucleolus. The protein resides in the nucleoplasm. It localises to the mitochondrion. In terms of biological role, structure-specific nuclease with 5'-flap endonuclease and 5'-3' exonuclease activities involved in DNA replication and repair. During DNA replication, cleaves the 5'-overhanging flap structure that is generated by displacement synthesis when DNA polymerase encounters the 5'-end of a downstream Okazaki fragment. It enters the flap from the 5'-end and then tracks to cleave the flap base, leaving a nick for ligation. Also involved in the long patch base excision repair (LP-BER) pathway, by cleaving within the apurinic/apyrimidinic (AP) site-terminated flap. Acts as a genome stabilization factor that prevents flaps from equilibrating into structures that lead to duplications and deletions. Also possesses 5'-3' exonuclease activity on nicked or gapped double-stranded DNA, and exhibits RNase H activity. Also involved in replication and repair of rDNA and in repairing mitochondrial DNA. The sequence is that of Flap endonuclease 1 from Meyerozyma guilliermondii (strain ATCC 6260 / CBS 566 / DSM 6381 / JCM 1539 / NBRC 10279 / NRRL Y-324) (Yeast).